Here is a 158-residue protein sequence, read N- to C-terminus: Transcription elongation factor GreA (158 aa).

This sequence belongs to the GreA/GreB family.

Its function is as follows. Necessary for efficient RNA polymerase transcription elongation past template-encoded arresting sites. The arresting sites in DNA have the property of trapping a certain fraction of elongating RNA polymerases that pass through, resulting in locked ternary complexes. Cleavage of the nascent transcript by cleavage factors such as GreA or GreB allows the resumption of elongation from the new 3'terminus. GreA releases sequences of 2 to 3 nucleotides. This is Transcription elongation factor GreA from Rhizobium etli (strain ATCC 51251 / DSM 11541 / JCM 21823 / NBRC 15573 / CFN 42).